Consider the following 632-residue polypeptide: DNA mismatch repair protein MutL (632 aa).

This sequence belongs to the DNA mismatch repair MutL/HexB family.

Functionally, this protein is involved in the repair of mismatches in DNA. It is required for dam-dependent methyl-directed DNA mismatch repair. May act as a 'molecular matchmaker', a protein that promotes the formation of a stable complex between two or more DNA-binding proteins in an ATP-dependent manner without itself being part of a final effector complex. This is DNA mismatch repair protein MutL from Pseudomonas putida (strain GB-1).